A 214-amino-acid chain; its full sequence is Thiamine-phosphate synthase (214 aa).

4-amino-2-methyl-5-(diphosphooxymethyl)pyrimidine-binding positions include 37-41 and N73; that span reads QYREK. The Mg(2+) site is built by D74 and D93. S112 is a binding site for 4-amino-2-methyl-5-(diphosphooxymethyl)pyrimidine. Residue 139-141 participates in 2-[(2R,5Z)-2-carboxy-4-methylthiazol-5(2H)-ylidene]ethyl phosphate binding; the sequence is TIS. K142 lines the 4-amino-2-methyl-5-(diphosphooxymethyl)pyrimidine pocket. 2-[(2R,5Z)-2-carboxy-4-methylthiazol-5(2H)-ylidene]ethyl phosphate contacts are provided by residues G171 and 191 to 192; that span reads IS.

It belongs to the thiamine-phosphate synthase family. The cofactor is Mg(2+).

The enzyme catalyses 2-[(2R,5Z)-2-carboxy-4-methylthiazol-5(2H)-ylidene]ethyl phosphate + 4-amino-2-methyl-5-(diphosphooxymethyl)pyrimidine + 2 H(+) = thiamine phosphate + CO2 + diphosphate. It carries out the reaction 2-(2-carboxy-4-methylthiazol-5-yl)ethyl phosphate + 4-amino-2-methyl-5-(diphosphooxymethyl)pyrimidine + 2 H(+) = thiamine phosphate + CO2 + diphosphate. It catalyses the reaction 4-methyl-5-(2-phosphooxyethyl)-thiazole + 4-amino-2-methyl-5-(diphosphooxymethyl)pyrimidine + H(+) = thiamine phosphate + diphosphate. Its pathway is cofactor biosynthesis; thiamine diphosphate biosynthesis; thiamine phosphate from 4-amino-2-methyl-5-diphosphomethylpyrimidine and 4-methyl-5-(2-phosphoethyl)-thiazole: step 1/1. Its function is as follows. Condenses 4-methyl-5-(beta-hydroxyethyl)thiazole monophosphate (THZ-P) and 2-methyl-4-amino-5-hydroxymethyl pyrimidine pyrophosphate (HMP-PP) to form thiamine monophosphate (TMP). The sequence is that of Thiamine-phosphate synthase from Listeria monocytogenes serovar 1/2a (strain ATCC BAA-679 / EGD-e).